Consider the following 163-residue polypeptide: Photosystem II extrinsic protein V (163 aa).

A signal peptide spans 1 to 26 (MLKRSSWLATLLGLLTVASVSTIVYA). Heme c contacts are provided by Cys63, Cys66, His67, and His118.

This sequence belongs to the cytochrome c family. PsbV subfamily. PSII is composed of 1 copy each of membrane proteins PsbA, PsbB, PsbC, PsbD, PsbE, PsbF, PsbH, PsbI, PsbJ, PsbK, PsbL, PsbM, PsbT, PsbY, PsbZ, Psb30/Ycf12, at least 3 peripheral proteins of the oxygen-evolving complex and a large number of cofactors. It forms dimeric complexes. The extrinsic subunits in red algae are PsbO (OEC33), PsbQ', cytochrome c-550 and PsbU. Heme c serves as cofactor.

Its subcellular location is the plastid. It is found in the chloroplast thylakoid membrane. One of the extrinsic, lumenal subunits of photosystem II (PSII). PSII is a light-driven water plastoquinone oxidoreductase, using light energy to abstract electrons from H(2)O, generating a proton gradient subsequently used for ATP formation. The extrinsic proteins stabilize the structure of photosystem II oxygen-evolving complex (OEC), the ion environment of oxygen evolution and protect the OEC against heat-induced inactivation. This is Photosystem II extrinsic protein V from Porphyra purpurea (Red seaweed).